The sequence spans 551 residues: Chaperonin GroEL (551 aa).

Residues 29-32 (TAGP), lysine 50, 86-90 (DGTTT), glycine 417, and aspartate 499 contribute to the ATP site.

It belongs to the chaperonin (HSP60) family. Forms a cylinder of 14 subunits composed of two heptameric rings stacked back-to-back. Interacts with the co-chaperonin GroES.

The protein resides in the cytoplasm. It catalyses the reaction ATP + H2O + a folded polypeptide = ADP + phosphate + an unfolded polypeptide.. In terms of biological role, together with its co-chaperonin GroES, plays an essential role in assisting protein folding. The GroEL-GroES system forms a nano-cage that allows encapsulation of the non-native substrate proteins and provides a physical environment optimized to promote and accelerate protein folding. The sequence is that of Chaperonin GroEL from Ehrlichia ruminantium (strain Gardel).